The sequence spans 1147 residues: Myosin light chain kinase, smooth muscle (1147 aa).

Positions 1–41 are actin-binding; that stretch reads MDFRANLQRQVKPKTVSEEERKVHSPQQVDFRSVLAKKGTP. The segment at 1–330 is disordered; that stretch reads MDFRANLQRQ…PPASPGTAPT (330 aa). The tract at residues 26 to 41 is calmodulin-binding; the sequence is PQQVDFRSVLAKKGTP. The span at 43–55 shows a compositional bias: pro residues; sequence TPVPEKAPPPKPA. 2 consecutive repeat copies span residues 100–111 and 112–123. A 16 X 12 AA tandem repeats region spans residues 100–288; that stretch reads SLKPVANAKP…KAVANAKPAE (189 aa). The stretch at 124 to 132 is one 3; truncated repeat; sequence TLKPVANAE. Tandem repeats lie at residues 133–144, 145–156, 157–168, 169–180, 181–192, 193–204, 205–216, 217–228, 229–240, 241–252, 253–264, 265–276, and 277–288. The interval 292-692 is actin-binding (calcium/calmodulin-insensitive); sequence PAGKEELKKE…TVTVNTEQKV (401 aa). Over residues 293–320 the composition is skewed to basic and acidic residues; it reads AGKEELKKEVQNDVNCKREKAGAADNEK. 2 consecutive Ig-like C2-type domains span residues 329–417 and 469–557; these read PTFK…CHVT and PQIP…VNLT. Residues cysteine 350 and cysteine 401 are joined by a disulfide bond. Disordered stretches follow at residues 424-476 and 644-678; these read SENA…QFPE and SEPS…KEPE. Residues 459–472 show a composition bias toward pro residues; it reads PKTPPKAATPPQIP. The Fibronectin type-III domain occupies 565-657; it reads PAGTPCASDI…QESELTTVGE (93 aa). The span at 644–653 shows a compositional bias: polar residues; it reads SEPSQESELT. Acidic residues predominate over residues 662 to 677; it reads PKDEVEEVSDDDEKEP. Serine 670 carries the post-translational modification Phosphoserine. The residue at position 681 (tyrosine 681) is a Phosphotyrosine; by ABL1. The Protein kinase domain occupies 696–951; the sequence is YDIEERLGSG…CTQCLQHPWL (256 aa). Residues 702–710 and lysine 725 contribute to the ATP site; that span reads LGSGKFGQV. The residue at position 807 (tyrosine 807) is a Phosphotyrosine; by ABL1. Catalysis depends on aspartate 817, which acts as the Proton acceptor. Tyrosine 867 is modified (phosphotyrosine; by ABL1). Residues 943 to 1006 form a calmodulin-binding region; it reads TQCLQHPWLM…SGLSGRKSST (64 aa). 5 positions are modified to phosphoserine: serine 991, serine 992, serine 1004, serine 1005, and serine 1008. A disordered region spans residues 999-1019; sequence LSGRKSSTGSPTSPLTAERLE. Residues 1002–1013 are compositionally biased toward polar residues; sequence RKSSTGSPTSPL. The residue at position 1010 (threonine 1010) is a Phosphothreonine. Serine 1011 carries the post-translational modification Phosphoserine. Residues 1041–1130 enclose the Ig-like C2-type 3 domain; the sequence is PYFSKTIRDL…GEATCTAELI (90 aa). A disulfide bridge links cysteine 1062 with cysteine 1114.

It belongs to the protein kinase superfamily. CAMK Ser/Thr protein kinase family. As to quaternary structure, all isoforms including Telokin bind calmodulin. Interacts with SVIL. Interacts with CTTN; this interaction is reduced during thrombin-induced endothelial cell (EC) contraction but is promoted by the barrier-protective agonist sphingosine 1-phosphate (S1P) within lamellipodia. A complex made of ABL1, CTTN and MYLK regulates cortical actin-based cytoskeletal rearrangement critical to sphingosine 1-phosphate (S1P)-mediated endothelial cell (EC) barrier enhancement. Binds to NAA10/ARD1 and PTK2B/PYK2. Mg(2+) is required as a cofactor. Ca(2+) serves as cofactor. In terms of processing, the C-terminus is deglutamylated by AGTPBP1/CCP1, AGBL1/CCP4 and AGBL4/CCP6, leading to the formation of Myosin light chain kinase, smooth muscle, deglutamylated form. The consequences of C-terminal deglutamylation are unknown. Can probably be down-regulated by phosphorylation. Tyrosine phosphorylation by ABL1 increases kinase activity, reverses MLCK-mediated inhibition of Arp2/3-mediated actin polymerization, and enhances CTTN-binding. Phosphorylation by SRC promotes CTTN binding. As to expression, isoform Telokin is found in all smooth muscle tested except the aorta. It is not present in non-muscle tissue.

It localises to the cytoplasm. The protein localises to the cell projection. The protein resides in the lamellipodium. It is found in the cleavage furrow. Its subcellular location is the cytoskeleton. It localises to the stress fiber. The enzyme catalyses L-seryl-[myosin light chain] + ATP = O-phospho-L-seryl-[myosin light chain] + ADP + H(+). It carries out the reaction L-threonyl-[myosin light chain] + ATP = O-phospho-L-threonyl-[myosin light chain] + ADP + H(+). All catalytically active isoforms require binding to calcium and calmodulin for activation. Functionally, calcium/calmodulin-dependent myosin light chain kinase implicated in smooth muscle contraction via phosphorylation of myosin light chains (MLC). Also regulates actin-myosin interaction through a non-kinase activity. Phosphorylates PTK2B/PYK2 and myosin light-chains. Involved in the inflammatory response (e.g. apoptosis, vascular permeability, leukocyte diapedesis), cell motility and morphology, airway hyperreactivity and other activities relevant to asthma. Required for tonic airway smooth muscle contraction that is necessary for physiological and asthmatic airway resistance. Necessary for gastrointestinal motility. Implicated in the regulation of endothelial as well as vascular permeability, probably via the regulation of cytoskeletal rearrangements. In the nervous system it has been shown to control the growth initiation of astrocytic processes in culture and to participate in transmitter release at synapses formed between cultured sympathetic ganglion cells. Critical participant in signaling sequences that result in fibroblast apoptosis. Plays a role in the regulation of epithelial cell survival. Required for epithelial wound healing, especially during actomyosin ring contraction during purse-string wound closure. Mediates RhoA-dependent membrane blebbing. Triggers TRPC5 channel activity in a calcium-dependent signaling, by inducing its subcellular localization at the plasma membrane. Promotes cell migration (including tumor cells) and tumor metastasis. PTK2B/PYK2 activation by phosphorylation mediates ITGB2 activation and is thus essential to trigger neutrophil transmigration during acute lung injury (ALI). May regulate optic nerve head astrocyte migration. Probably involved in mitotic cytoskeletal regulation. Regulates tight junction probably by modulating ZO-1 exchange in the perijunctional actomyosin ring. Mediates burn-induced microvascular barrier injury; triggers endothelial contraction in the development of microvascular hyperpermeability by phosphorylating MLC. Essential for intestinal barrier dysfunction. Mediates Giardia spp.-mediated reduced epithelial barrier function during giardiasis intestinal infection via reorganization of cytoskeletal F-actin and tight junctional ZO-1. Necessary for hypotonicity-induced Ca(2+) entry and subsequent activation of volume-sensitive organic osmolyte/anion channels (VSOAC) in cervical cancer cells. The polypeptide is Myosin light chain kinase, smooth muscle (MYLK) (Oryctolagus cuniculus (Rabbit)).